The primary structure comprises 464 residues: Protein FAM90A13 (464 aa).

Disordered stretches follow at residues 1–42 (MMAR…DPRL), 69–389 (VPAT…HDGA), and 411–437 (APSF…SEAP). Composition is skewed to basic and acidic residues over residues 74–89 (GKKE…KPRG) and 97–114 (NKDK…DPQR). The span at 180–197 (LASLSPLRKASLSSSSSL) shows a compositional bias: low complexity.

The protein belongs to the FAM90 family.

The sequence is that of Protein FAM90A13 from Homo sapiens (Human).